A 278-amino-acid chain; its full sequence is Dermonecrotic toxin LspiSicTox-betaIE2i (278 aa).

Histidine 5 is an active-site residue. Mg(2+) contacts are provided by glutamate 25 and aspartate 27. Histidine 41 (nucleophile) is an active-site residue. Cystine bridges form between cysteine 45-cysteine 51 and cysteine 47-cysteine 190. Position 85 (glutamate 85) interacts with Mg(2+).

The protein belongs to the arthropod phospholipase D family. Class II subfamily. Requires Mg(2+) as cofactor. In terms of tissue distribution, expressed by the venom gland.

The protein resides in the secreted. The catalysed reaction is an N-(acyl)-sphingosylphosphocholine = an N-(acyl)-sphingosyl-1,3-cyclic phosphate + choline. The enzyme catalyses an N-(acyl)-sphingosylphosphoethanolamine = an N-(acyl)-sphingosyl-1,3-cyclic phosphate + ethanolamine. It catalyses the reaction a 1-acyl-sn-glycero-3-phosphocholine = a 1-acyl-sn-glycero-2,3-cyclic phosphate + choline. It carries out the reaction a 1-acyl-sn-glycero-3-phosphoethanolamine = a 1-acyl-sn-glycero-2,3-cyclic phosphate + ethanolamine. Dermonecrotic toxins cleave the phosphodiester linkage between the phosphate and headgroup of certain phospholipids (sphingolipid and lysolipid substrates), forming an alcohol (often choline) and a cyclic phosphate. This toxin acts on sphingomyelin (SM). It may also act on ceramide phosphoethanolamine (CPE), lysophosphatidylcholine (LPC) and lysophosphatidylethanolamine (LPE), but not on lysophosphatidylserine (LPS), and lysophosphatidylglycerol (LPG). It acts by transphosphatidylation, releasing exclusively cyclic phosphate products as second products. Induces dermonecrosis, hemolysis, increased vascular permeability, edema, inflammatory response, and platelet aggregation. The sequence is that of Dermonecrotic toxin LspiSicTox-betaIE2i from Loxosceles spinulosa (Recluse spider).